An 845-amino-acid polypeptide reads, in one-letter code: Meiotically up-regulated gene 4 protein (845 aa).

The tract at residues 122-158 is disordered; sequence LSTTDEQPKEPSIISISSSSSDPSSSPPPSSSLLKTP. Residues 132 to 145 are compositionally biased toward low complexity; sequence PSIISISSSSSDPS. A helical membrane pass occupies residues 726-746; the sequence is FLVFLTFTGMTLFILYQLTFP.

It is found in the membrane. Has a role in meiosis. This Schizosaccharomyces pombe (strain 972 / ATCC 24843) (Fission yeast) protein is Meiotically up-regulated gene 4 protein (mug4).